The following is a 793-amino-acid chain: Ankyrin repeat domain-containing protein SOWAHB (793 aa).

Disordered stretches follow at residues 83-185 (EEGL…QARA), 219-290 (ATAE…ELLT), 337-360 (QLPLEPGSTEPNSEPPDPCLSSHS), and 396-543 (DFVD…SPRV). Low complexity-rich tracts occupy residues 96 to 108 (APSAGGAAPCSPR), 134 to 144 (AGAAARAADAA), and 175 to 185 (AAAAAGAQARA). A Phosphoserine modification is found at Ser-106. The segment covering 220–244 (TAEEKPARALPAQDDRGASREREEG) has biased composition (basic and acidic residues). Residues 246–273 (LAEPAPVPAVAHSPPATVEAATSRASPP) show a composition bias toward low complexity. Position 271 is a phosphoserine (Ser-271). Positions 396-406 (DFVDQESDGSE) are enriched in acidic residues. Composition is skewed to low complexity over residues 407–417 (ESSSGPKDSPG) and 498–508 (RSSLAGRAKLS). Residues 521–533 (KRSRRPPRSRKPS) are compositionally biased toward basic residues. ANK repeat units lie at residues 630–659 (TGYTALHWIAKHGDLRALQDLVSGAKKAGI) and 669–699 (CGYTPLHLAAIHGHQGVIKLLVQRLASRVNV). Ser-761 is modified (phosphoserine).

The protein belongs to the SOWAH family.

The sequence is that of Ankyrin repeat domain-containing protein SOWAHB (SOWAHB) from Homo sapiens (Human).